Here is a 69-residue protein sequence, read N- to C-terminus: Beta-defensin 1 (69 aa).

An N-terminal signal peptide occupies residues 1 to 21 (MKTHYFLLVMLFFLFSQMELG). Positions 22–32 (AGILTSLGRRT) are excised as a propeptide. Intrachain disulfides connect Cys37-Cys66, Cys44-Cys59, and Cys49-Cys67.

Belongs to the beta-defensin family. As to quaternary structure, monomer. Homodimer. In terms of tissue distribution, highly expressed in kidney.

The protein localises to the secreted. Its subcellular location is the membrane. In terms of biological role, has bactericidal activity. May act as a ligand for C-C chemokine receptor CCR6. Positively regulates the sperm motility and bactericidal activity in a CCR6-dependent manner. Binds to CCR6 and triggers Ca2+ mobilization in the sperm which is important for its motility. The chain is Beta-defensin 1 (Defb1) from Rattus norvegicus (Rat).